The primary structure comprises 150 residues: Flagellar assembly factor FliW (150 aa).

The protein belongs to the FliW family. As to quaternary structure, interacts with translational regulator CsrA and flagellin(s).

The protein localises to the cytoplasm. Its function is as follows. Acts as an anti-CsrA protein, binds CsrA and prevents it from repressing translation of its target genes, one of which is flagellin. Binds to flagellin and participates in the assembly of the flagellum. The chain is Flagellar assembly factor FliW from Leptospira interrogans serogroup Icterohaemorrhagiae serovar copenhageni (strain Fiocruz L1-130).